The chain runs to 540 residues: Alanine aminotransferase 2 (540 aa).

Lysine 358 is modified (N6-(pyridoxal phosphate)lysine).

The protein belongs to the class-I pyridoxal-phosphate-dependent aminotransferase family. Alanine aminotransferase subfamily. Homodimer. The cofactor is pyridoxal 5'-phosphate.

It carries out the reaction L-alanine + 2-oxoglutarate = pyruvate + L-glutamate. Its pathway is amino-acid degradation; L-alanine degradation via transaminase pathway; pyruvate from L-alanine: step 1/1. Catalyzes the reversible transamination between alanine and 2-oxoglutarate to form pyruvate and glutamate. In Xenopus laevis (African clawed frog), this protein is Alanine aminotransferase 2 (gpt2).